A 702-amino-acid chain; its full sequence is Methionine--tRNA ligase (702 aa).

A 'HIGH' region motif is present at residues 14 to 24 (PYANGPVHLGH). The Zn(2+) site is built by cysteine 146, cysteine 149, cysteine 159, and cysteine 162. A 'KMSKS' region motif is present at residues 344–348 (KFSKS). Lysine 347 is an ATP binding site. Residues 601 to 702 (DFQKVDLRAA…GEKINGSSVQ (102 aa)) form the tRNA-binding domain.

Belongs to the class-I aminoacyl-tRNA synthetase family. MetG type 1 subfamily. Homodimer. Zn(2+) serves as cofactor.

Its subcellular location is the cytoplasm. The enzyme catalyses tRNA(Met) + L-methionine + ATP = L-methionyl-tRNA(Met) + AMP + diphosphate. Its function is as follows. Is required not only for elongation of protein synthesis but also for the initiation of all mRNA translation through initiator tRNA(fMet) aminoacylation. This is Methionine--tRNA ligase from Chlorobium phaeovibrioides (strain DSM 265 / 1930) (Prosthecochloris vibrioformis (strain DSM 265)).